The chain runs to 213 residues: 5-deoxy-D-ribulose 1-phosphate aldolase (213 aa).

Residues 28-29 (GN), 45-46 (SG), and 74-76 (SSE) each bind substrate. E76 functions as the Proton donor/acceptor in the catalytic mechanism. Mn(2+)-binding residues include E76, H95, H97, and H157.

Belongs to the aldolase class II family. As to quaternary structure, forms homooligomers, possibly homotetramers. It depends on Mn(2+) as a cofactor.

It carries out the reaction 5-deoxy-D-ribulose 1-phosphate = dihydroxyacetone phosphate + acetaldehyde. It functions in the pathway carbohydrate degradation. Functionally, catalyzes the cleavage of 5-deoxy-D-ribulose 1-phosphate to yield dihydroxyacetone phosphate (DHAP) and acetaldehyde, as part of a 5-deoxyribose salvage pathway that recycles this toxic radical SAM enzyme by-product to mainstream metabolites. Is also able to catalyze the reverse reaction, using several aldehydes as substrate, with acetaldehyde being the preferred substrate. In Bacillus thuringiensis serovar kurstaki (strain ATCC 35866 / NRRL B-4488 / HD73), this protein is 5-deoxy-D-ribulose 1-phosphate aldolase.